A 158-amino-acid polypeptide reads, in one-letter code: Small ribosomal subunit protein uS9 (158 aa).

The segment covering 1–20 (MSETMQSLDQLSALKTTQPD) has biased composition (polar residues). The segment at 1–29 (MSETMQSLDQLSALKTTQPDAPTYTKKVD) is disordered.

The protein belongs to the universal ribosomal protein uS9 family.

The sequence is that of Small ribosomal subunit protein uS9 from Rhodopseudomonas palustris (strain BisB5).